The sequence spans 461 residues: Autophagy-related protein 6 (461 aa).

Basic and acidic residues predominate over residues 75-88; sequence EEHGTDSSPDHDSS. 2 disordered regions span residues 75–94 and 101–124; these read EEHG…ASLV and EEPV…PISG. Over residues 103–113 the composition is skewed to low complexity; that stretch reads PVPVSAPSPES. Residues 194-286 are a coiled coil; sequence TKLRDSIQEC…VLNRLDHLRN (93 aa).

Belongs to the beclin family.

In terms of biological role, required for cytoplasm to vacuole transport (Cvt) and autophagy. Also involved in endosome-to-Golgi retrograde transport. The polypeptide is Autophagy-related protein 6 (ATG6) (Meyerozyma guilliermondii (strain ATCC 6260 / CBS 566 / DSM 6381 / JCM 1539 / NBRC 10279 / NRRL Y-324) (Yeast)).